The following is a 747-amino-acid chain: MATKFPSFNQGLAQDPTTRRIWYGIATAHDFESHDGMTEEQLYQKLFATHFGHLAIIGLWVAGNLFHIAWQGNFEQWVTDPLHIRPIAHAIWDPHFGQGITDALTQAGATSPVNIAYSGLYHWWYTIGMRTNAQLFQGAIFLNILVCWLLFAGWLHLQPKFRPSLAWFKNAEAQLNHHLAVLFGFSSIAWTGHLVHVAIPESRGQHVGWDNWLSVLPHPQGLAPFFSLNWGAYAQNPDSLDAVFGTSQGAGTAIFTFLGGLHPQSESLWLTDIAHHHLAIGVMFIIAGHMYRNTFGIGHTLKEITEAHNTDNPNDPHTTAKDGRHFGVNHNGIFETVNNSLHFQLGLALASLGAACSLVAQHMGALPSYAFIARDYTTQSALYTHHQYIAMFLMVGAFSHGAIFFVRDYDPELNKGNVLARVLETKEALISHLSWVTMLLGFHTLGIYVHNDVVVAFGNPEKQILVEPVFAQAIQAFSGKVMYGINALLANANSSATLAANSMPGNHYWMDMINRQDALTNFLPIGPADFLVHHAIALGLHTTALILIKGALDARGSKLIPDKKDFGYAFPCDGPGRGGTCDSSAWDATYLAMFWALNTIAWITFYWHWKHLAIWQGNVAQFNESGTYLMGWFRDYLWLNSSQLINGYNPFGVNALSPWAWMFLFGHLIWATGFMFLISWRGYWQELIETLVWAHQRTPIANLVGWRDKPVALSIVQARLVGLTHFTVGNFVTFGAFVIASTSGKFG.

Helical transmembrane passes span 46-69 (LFAT…FHIA), 135-158 (LFQG…LHLQ), 175-199 (LNHH…HVAI), 273-291 (IAHH…GHMY), 341-364 (LHFQ…QHMG), 380-406 (SALY…IFFV), 428-450 (ALIS…IYVH), and 530-548 (FLVH…LILI). Positions 572 and 581 each coordinate [4Fe-4S] cluster. Helical transmembrane passes span 588-609 (ATYL…YWHW) and 656-678 (LSPW…MFLI). His-667, Met-675, and Tyr-683 together coordinate divinyl chlorophyll a. Residue Trp-684 participates in phylloquinone binding. A helical transmembrane segment spans residues 720–740 (LVGLTHFTVGNFVTFGAFVIA).

This sequence belongs to the PsaA/PsaB family. As to quaternary structure, the PsaA/B heterodimer binds the P700 divinyl chlorophyll special pair and subsequent electron acceptors. PSI consists of a core antenna complex that captures photons, and an electron transfer chain that converts photonic excitation into a charge separation. The cyanobacterial PSI reaction center is composed of one copy each of PsaA,B,C,D,E,F,I,J,K,L,M and X, and forms trimeric complexes. Requires PSI electron transfer chain: 5 divinyl chlorophyll a, 1 divinyl chlorophyll a', 2 phylloquinones and 3 4Fe-4S clusters. PSI core antenna: 90 divinyl chlorophyll a, 22 carotenoids, 3 phospholipids and 1 galactolipid. P700 is a divinyl chlorophyll a/divinyl chlorophyll a' dimer, A0 is one or more divinyl chlorophyll a, A1 is one or both phylloquinones and FX is a shared 4Fe-4S iron-sulfur center. as cofactor.

The protein resides in the cellular thylakoid membrane. The catalysed reaction is reduced [plastocyanin] + hnu + oxidized [2Fe-2S]-[ferredoxin] = oxidized [plastocyanin] + reduced [2Fe-2S]-[ferredoxin]. Functionally, psaA and PsaB bind P700, the primary electron donor of photosystem I (PSI), as well as the electron acceptors A0, A1 and FX. PSI is a plastocyanin/cytochrome c6-ferredoxin oxidoreductase, converting photonic excitation into a charge separation, which transfers an electron from the donor P700 chlorophyll pair to the spectroscopically characterized acceptors A0, A1, FX, FA and FB in turn. Oxidized P700 is reduced on the lumenal side of the thylakoid membrane by plastocyanin or cytochrome c6. The polypeptide is Photosystem I P700 chlorophyll a apoprotein A2 (Prochlorococcus marinus (strain SARG / CCMP1375 / SS120)).